Consider the following 453-residue polypeptide: Septin-10 (453 aa).

The disordered stretch occupies residues 18 to 43 (KTAHTSSQVSDHEQKQKDSPRSLTMS). Residues 27-37 (SDHEQKQKDSP) are compositionally biased toward basic and acidic residues. Residues 62 to 328 (QGFCFNILCV…ELYRRRKLEE (267 aa)) form the Septin-type G domain. Residues 72–79 (GETGIGKS) are G1 motif. GTP contacts are provided by residues 72–79 (GETGIGKS), Gly127, 208–216 (KADAISKTE), Gly262, and Arg277. The segment at 124-127 (NTVG) is G3 motif. The tract at residues 207–210 (AKAD) is G4 motif. A disordered region spans residues 433 to 453 (TFMTPGSNLRKDKDRKNSNFM). The segment covering 441–453 (LRKDKDRKNSNFM) has biased composition (basic and acidic residues).

Belongs to the TRAFAC class TrmE-Era-EngA-EngB-Septin-like GTPase superfamily. Septin GTPase family. As to quaternary structure, septins polymerize into heterooligomeric protein complexes that form filaments, and can associate with cellular membranes, actin filaments and microtubules. GTPase activity is required for filament formation. Interacts with ADGB. Post-translationally, proteolytically cleaved in vitro in a calmodulin-dependent manner.

It is found in the cytoplasm. The protein resides in the cytoskeleton. The protein localises to the cell projection. Its subcellular location is the cilium. It localises to the flagellum. Its function is as follows. Filament-forming cytoskeletal GTPase. May play a role in cytokinesis (Potential). The sequence is that of Septin-10 from Bos taurus (Bovine).